Consider the following 245-residue polypeptide: tRNA (guanine-N(1)-)-methyltransferase (245 aa).

Residues Gly-111 and 131–136 contribute to the S-adenosyl-L-methionine site; that span reads MGDYVL.

The protein belongs to the RNA methyltransferase TrmD family. In terms of assembly, homodimer.

The protein resides in the cytoplasm. The enzyme catalyses guanosine(37) in tRNA + S-adenosyl-L-methionine = N(1)-methylguanosine(37) in tRNA + S-adenosyl-L-homocysteine + H(+). Functionally, specifically methylates guanosine-37 in various tRNAs. The polypeptide is tRNA (guanine-N(1)-)-methyltransferase (Staphylococcus aureus (strain Mu3 / ATCC 700698)).